We begin with the raw amino-acid sequence, 122 residues long: Large ribosomal subunit protein uL14 (122 aa).

The protein belongs to the universal ribosomal protein uL14 family. As to quaternary structure, part of the 50S ribosomal subunit. Forms a cluster with proteins L3 and L19. In the 70S ribosome, L14 and L19 interact and together make contacts with the 16S rRNA in bridges B5 and B8.

Binds to 23S rRNA. Forms part of two intersubunit bridges in the 70S ribosome. The chain is Large ribosomal subunit protein uL14 from Anaeromyxobacter dehalogenans (strain 2CP-1 / ATCC BAA-258).